The following is a 95-amino-acid chain: Aspartyl/glutamyl-tRNA(Asn/Gln) amidotransferase subunit C (95 aa).

Belongs to the GatC family. In terms of assembly, heterotrimer of A, B and C subunits.

The enzyme catalyses L-glutamyl-tRNA(Gln) + L-glutamine + ATP + H2O = L-glutaminyl-tRNA(Gln) + L-glutamate + ADP + phosphate + H(+). The catalysed reaction is L-aspartyl-tRNA(Asn) + L-glutamine + ATP + H2O = L-asparaginyl-tRNA(Asn) + L-glutamate + ADP + phosphate + 2 H(+). Functionally, allows the formation of correctly charged Asn-tRNA(Asn) or Gln-tRNA(Gln) through the transamidation of misacylated Asp-tRNA(Asn) or Glu-tRNA(Gln) in organisms which lack either or both of asparaginyl-tRNA or glutaminyl-tRNA synthetases. The reaction takes place in the presence of glutamine and ATP through an activated phospho-Asp-tRNA(Asn) or phospho-Glu-tRNA(Gln). The sequence is that of Aspartyl/glutamyl-tRNA(Asn/Gln) amidotransferase subunit C from Brucella melitensis biotype 2 (strain ATCC 23457).